A 124-amino-acid chain; its full sequence is Protein RibT (124 aa).

In terms of domain architecture, N-acetyltransferase spans 3-124; it reads IRYKKSFEKI…QQDQDISYNN (122 aa).

Functionally, involved in riboflavin biosynthesis. The polypeptide is Protein RibT (ribT) (Bacillus subtilis (strain 168)).